The primary structure comprises 645 residues: TBC1 domain family member 17 (645 aa).

The disordered stretch occupies residues 57–85 (PTQILFKKDPSRGEPSTSEEEPTFDPGYE). Residues 217–309 (DPYSTTFSSF…PELKNRIFSG (93 aa)) are required for interaction with OPTN. The region spanning 310–520 (GLSPGLRREA…RLWEVLWTGL (211 aa)) is the Rab-GAP TBC domain. The disordered stretch occupies residues 596–645 (QPEEPSSPSPPVSPMPLSPTRAPLPPPLPEEVIPQPDSSLEILPEDEDGA). Over residues 600–624 (PSSPSPPVSPMPLSPTRAPLPPPLP) the composition is skewed to pro residues. A phosphoserine mark is found at S602, S604, and S608. The residue at position 615 (T615) is a Phosphothreonine.

Interacts with OPTN; this interaction mediates TBC1D17 transient association with Rab8.

The protein resides in the cytoplasmic vesicle. The protein localises to the autophagosome. Its subcellular location is the cytoplasm. It is found in the recycling endosome. In terms of biological role, probable GTPase-activating protein that inhibits RAB8A/B function. Reduces Rab8 recruitment to tubules emanating from the endocytic recycling compartment (ERC) and inhibits Rab8-mediated endocytic trafficking, such as that of transferrin receptor (TfR). Involved in regulation of autophagy. This chain is TBC1 domain family member 17 (Tbc1d17), found in Mus musculus (Mouse).